A 705-amino-acid polypeptide reads, in one-letter code: Putative membrane protein SCO6666 (705 aa).

The next 13 helical transmembrane spans lie at 16 to 36 (VMLL…GVFG), 144 to 164 (LHGI…PLLG), 177 to 197 (NAEL…FGGL), 201 to 221 (GLPL…LFGF), 232 to 252 (IQVT…LMLV), 280 to 300 (LFSG…PSTF), 306 to 326 (LAVA…LPAL), 360 to 380 (VAVL…VTGM), 504 to 524 (ALTV…SVLL), 528 to 548 (TVAT…WVFQ), 561 to 581 (LGAL…GLAM), 615 to 635 (VVTC…TGGF), and 636 to 656 (SPIL…ATVV).

It belongs to the resistance-nodulation-cell division (RND) (TC 2.A.6) family. MmpL subfamily.

It is found in the cell membrane. This is Putative membrane protein SCO6666 from Streptomyces coelicolor (strain ATCC BAA-471 / A3(2) / M145).